The following is a 25-amino-acid chain: Acyl carrier protein (25 aa).

The region spanning 2–25 (ESIEQRVKKIVAEQLGVAEAEIKA) is the Carrier domain.

Belongs to the acyl carrier protein (ACP) family. 4'-phosphopantetheine is transferred from CoA to a specific serine of apo-ACP by AcpS. This modification is essential for activity because fatty acids are bound in thioester linkage to the sulfhydryl of the prosthetic group.

The protein resides in the cytoplasm. It participates in lipid metabolism; fatty acid biosynthesis. Functionally, carrier of the growing fatty acid chain in fatty acid biosynthesis. The sequence is that of Acyl carrier protein (acpP) from Alcaligenes faecalis.